The following is a 206-amino-acid chain: uncharacterized protein (206 aa).

The N-terminal stretch at 1–22 (MPKLRLIGLTLLALSATAVSHA) is a signal peptide. Residues 23 to 89 (EETRYVSDEL…IPLKQLSTEP (67 aa)) enclose the SH3b domain. A helical membrane pass occupies residues 169-191 (IIMQWFMYGGGVLGLGLLLGLVL).

This sequence to H.influenzae HI_1605.

Its subcellular location is the membrane. This is an uncharacterized protein from Escherichia coli O157:H7.